We begin with the raw amino-acid sequence, 381 residues long: rRNA adenine N-6-methyltransferase (381 aa).

The segment covering 1–19 has biased composition (basic and acidic residues); that stretch reads MSSSDEQPRPRRRNQDRQH. A disordered region spans residues 1–42; it reads MSSSDEQPRPRRRNQDRQHPNQNRPVLGRTERDRNRRQFGQN. The S-adenosyl-L-methionine site is built by Asn42, Leu44, Gly69, Glu90, Asp115, and Ala131. The segment at 282 to 381 is disordered; the sequence is RLDQKNEPRG…PGRRGGPGQR (100 aa). Over residues 301–358 the composition is skewed to basic and acidic residues; it reads GGRDHGDRRTGGQDRGDRRTGGRDHRDRQASGHGDRRSSGRNRDDGRTGEREQGDQGG. A compositionally biased stretch (gly residues) spans 359-381; sequence RRGPSGGGRTGGRPGRRGGPGQR.

The protein belongs to the class I-like SAM-binding methyltransferase superfamily. rRNA adenine N(6)-methyltransferase family.

The catalysed reaction is adenosine(2085) in 23S rRNA + 2 S-adenosyl-L-methionine = N(6)-dimethyladenosine(2085) in 23S rRNA + 2 S-adenosyl-L-homocysteine + 2 H(+). This protein produces a dimethylation of the adenine residue at position 2085 in 23S rRNA, resulting in reduced affinity between ribosomes and macrolide-lincosamide-streptogramin B antibiotics. This is rRNA adenine N-6-methyltransferase (ermE) from Saccharopolyspora erythraea (strain ATCC 11635 / DSM 40517 / JCM 4748 / NBRC 13426 / NCIMB 8594 / NRRL 2338).